Consider the following 173-residue polypeptide: Translation initiation factor IF-3 (173 aa).

Belongs to the IF-3 family. In terms of assembly, monomer.

Its subcellular location is the cytoplasm. Functionally, IF-3 binds to the 30S ribosomal subunit and shifts the equilibrium between 70S ribosomes and their 50S and 30S subunits in favor of the free subunits, thus enhancing the availability of 30S subunits on which protein synthesis initiation begins. The polypeptide is Translation initiation factor IF-3 (Phenylobacterium zucineum (strain HLK1)).